We begin with the raw amino-acid sequence, 162 residues long: SCF ubiquitin ligase complex protein SKP1b (162 aa).

At Ser-2 the chain carries N-acetylserine. An interaction with the F-box domain of F-box proteins region spans residues 100-162 (ILAANYLDIK…NEWCEDKGGN (63 aa)). Pro-143 is subject to 4-hydroxyproline. O-linked (GlcNAc...) hydroxyproline glycosylation is present at Pro-143.

Belongs to the SKP1 family. Multiprotein complex (SCF) with cullin and F-box-containing protein. Capable of undergoing aggregation. O-linked glycan consists of linear Gal-Gal-Fuc-Gal-GlcNAc. Post-translationally, not glycosylated in prespore cells. In terms of processing, fpaA and fpaB seem to be identically glycosylated. Glycosylation is required for nuclear enrichment. Hydroxylated by phyA.

It localises to the cytoplasm. It is found in the nucleus. The polypeptide is SCF ubiquitin ligase complex protein SKP1b (fpaB-1) (Dictyostelium discoideum (Social amoeba)).